Here is a 207-residue protein sequence, read N- to C-terminus: MLAVHRPSSAVSDGDSVQIPMMIASFQKRFPSLSRDSTAARFHTHEVGPNQCCSAVIQEISAPISTVWSVVRRFDNPQAYKHFLKSCSVIGGDGDNVGSLRQVHVVSGLPAASSTERLDILDDERHVISFSVVGGDHRLSNYRSVTTLHPSPISGTVVVESYVVDVPPGNTKEETCDFVDVIVRCNLQSLAKIAENTAAESKKKMSL.

Residues 45–195 (HEVGPNQCCS…NLQSLAKIAE (151 aa)) form an START-like region. Cys52 and Cys176 are oxidised to a cystine. Residues Lys81, 111 to 116 (AASSTE), 138 to 144 (RLSNYRS), and Glu160 each bind abscisate. The Gate loop signature appears at 107–111 (SGLPA). The Latch loop motif lies at 137–139 (HRL).

This sequence belongs to the PYR/PYL/RCAR abscisic acid intracellular receptor family. Monomer. Homodimer. Binds ABA on one subunit only. Interacts with HAB1, ABI1 and ABI2, and possibly with other PP2Cs. Binds to CARs protein in an ABA-independent manner, both at the plasma membrane and in the nucleus. Interacts directly with CAR1 and CAR4. Interacts with TOPP1. Interacts with DDA1. Interacts with FREE1 (via N-terminus). Interacts with the E3 ubiquitin-protein ligase RSL1 at the plasma membrane. In terms of processing, ubiquitynated and degraded by the proteasome upon binding to the E3 ubiquitin-protein ligase RSL1 at the plasma membrane.

It is found in the cytoplasm. It localises to the nucleus. The protein resides in the cell membrane. The protein localises to the vacuole. Functionally, receptor for abscisic acid (ABA) required for ABA-mediated responses such as stomatal closure and germination inhibition. Inhibits the activity of group-A protein phosphatases type 2C (PP2Cs) when activated by ABA. Can be activated by both (-)-ABA and (+)-ABA. The polypeptide is Abscisic acid receptor PYL4 (Arabidopsis thaliana (Mouse-ear cress)).